The sequence spans 294 residues: MKQTTIARRVETVGIGLHKGEPIRLILEPLDANSGIILHREDLGISFKAEPKNVINTQMATVVGNEKGFISTIEHLMAAVNGYGIDNIRISVDANEIPVMDGSAISFCMLLDEAGIRHLDAGKKVILVRREVEVIEGSKFVRTSPSRNPKFDYTIKFDHPVIGEQRYLFEFSKSSFVKNIARARTFGFLKDLQRLQAQNLALGASLDNAVAIDDTHILNPEGLRFENEFVRHKILDAVGDLSLLGAPLLGDYTAFAGSHDLNHKLTLALMADEKNYEIATLSGELLKEYQKVFA.

Residues His75, His232, and Asp236 each contribute to the Zn(2+) site. Catalysis depends on His259, which acts as the Proton donor.

This sequence belongs to the LpxC family. Zn(2+) is required as a cofactor.

The catalysed reaction is a UDP-3-O-[(3R)-3-hydroxyacyl]-N-acetyl-alpha-D-glucosamine + H2O = a UDP-3-O-[(3R)-3-hydroxyacyl]-alpha-D-glucosamine + acetate. It functions in the pathway glycolipid biosynthesis; lipid IV(A) biosynthesis; lipid IV(A) from (3R)-3-hydroxytetradecanoyl-[acyl-carrier-protein] and UDP-N-acetyl-alpha-D-glucosamine: step 2/6. Catalyzes the hydrolysis of UDP-3-O-myristoyl-N-acetylglucosamine to form UDP-3-O-myristoylglucosamine and acetate, the committed step in lipid A biosynthesis. In Campylobacter concisus (strain 13826), this protein is UDP-3-O-acyl-N-acetylglucosamine deacetylase.